The chain runs to 168 residues: Crossover junction endodeoxyribonuclease RuvC (168 aa).

Catalysis depends on residues D10, E70, and D143. The Mg(2+) site is built by D10, E70, and D143.

It belongs to the RuvC family. As to quaternary structure, homodimer which binds Holliday junction (HJ) DNA. The HJ becomes 2-fold symmetrical on binding to RuvC with unstacked arms; it has a different conformation from HJ DNA in complex with RuvA. In the full resolvosome a probable DNA-RuvA(4)-RuvB(12)-RuvC(2) complex forms which resolves the HJ. Mg(2+) is required as a cofactor.

The protein localises to the cytoplasm. The catalysed reaction is Endonucleolytic cleavage at a junction such as a reciprocal single-stranded crossover between two homologous DNA duplexes (Holliday junction).. Its function is as follows. The RuvA-RuvB-RuvC complex processes Holliday junction (HJ) DNA during genetic recombination and DNA repair. Endonuclease that resolves HJ intermediates. Cleaves cruciform DNA by making single-stranded nicks across the HJ at symmetrical positions within the homologous arms, yielding a 5'-phosphate and a 3'-hydroxyl group; requires a central core of homology in the junction. The consensus cleavage sequence is 5'-(A/T)TT(C/G)-3'. Cleavage occurs on the 3'-side of the TT dinucleotide at the point of strand exchange. HJ branch migration catalyzed by RuvA-RuvB allows RuvC to scan DNA until it finds its consensus sequence, where it cleaves and resolves the cruciform DNA. The polypeptide is Crossover junction endodeoxyribonuclease RuvC (Thermotoga maritima (strain ATCC 43589 / DSM 3109 / JCM 10099 / NBRC 100826 / MSB8)).